The following is a 294-amino-acid chain: UPF0761 membrane protein MADE_1017605/MADE_1018330 (294 aa).

6 consecutive transmembrane segments (helical) span residues 45–65, 99–119, 141–161, 182–202, 213–233, and 247–267; these read LLSL…FPAF, ASQM…MLIS, FAIY…SVVV, FLLS…LYMV, AFVG…GFAL, and ALAV…IVLF.

This sequence belongs to the UPF0761 family.

The protein resides in the cell inner membrane. The protein is UPF0761 membrane protein MADE_1017605/MADE_1018330 of Alteromonas mediterranea (strain DSM 17117 / CIP 110805 / LMG 28347 / Deep ecotype).